The sequence spans 470 residues: Neuronal acetylcholine receptor subunit beta-4 (470 aa).

The first 3 residues, 1–3, serve as a signal peptide directing secretion; sequence STA. The Extracellular portion of the chain corresponds to 4-216; that stretch reads ADAEEKLMNH…IIKRKPLFYT (213 aa). Asn-29, Asn-118, and Asn-146 each carry an N-linked (GlcNAc...) asparagine glycan. A disulfide bridge links Cys-133 with Cys-147. The helical transmembrane segment at 217–237 threads the bilayer; it reads INLIIPCVLITSLAILVFYLP. Topologically, residues 238 to 245 are cytoplasmic; it reads SDCGEKMT. A Na(+)-binding site is contributed by Glu-242. The chain crosses the membrane as a helical span at residues 246–266; it reads LCISVLLALTVFLLLISKIVP. Residues 267-278 lie on the Extracellular side of the membrane; it reads PTSLDVPLIGKY. A helical membrane pass occupies residues 279–299; the sequence is LMFTMVLVTFSIVTSVCVLNV. Topologically, residues 300-438 are cytoplasmic; the sequence is HHRSPSTHTM…WKYVAMVVDR (139 aa). The helical transmembrane segment at 439–459 threads the bilayer; it reads LFLWIFVLVCVLGTVGLFLQP. Over 460–470 the chain is Extracellular; the sequence is LFQNHIAATNP.

It belongs to the ligand-gated ion channel (TC 1.A.9) family. Acetylcholine receptor (TC 1.A.9.1) subfamily. Beta-4/CHRNB4 sub-subfamily. In terms of assembly, neuronal AChR is composed of two different types of subunits: alpha and beta. CHRNB4/Beta-4 subunit can be combined to CHRNA2/alpha-2, CHRNA3/alpha-3 or CHRNA4/alpha-4, CHRNA5/alpha-5 and CHRNB3/beta-3 to give rise to functional receptors.

Its subcellular location is the synaptic cell membrane. The protein resides in the cell membrane. It catalyses the reaction Ca(2+)(in) = Ca(2+)(out). The enzyme catalyses K(+)(in) = K(+)(out). It carries out the reaction Na(+)(in) = Na(+)(out). Activated by a myriad of ligands such as acetylcholine, cytisine, nicotine, choline and epibatidine. The heteropentamer CHRNA3:CHRNB4 activity is blocked by the alpha-conotoxin ImI and AuIB. Its function is as follows. Component of neuronal acetylcholine receptors (nAChRs) that function as pentameric, ligand-gated cation channels with high calcium permeability among other activities. nAChRs are excitatory neurotrasnmitter receptors formed by a collection of nAChR subunits known to mediate synaptic transmission in the nervous system and the neuromuscular junction. Each nAchR subunit confers differential attributes to channel properties, including activation, deactivation and desensitization kinetics, pH sensitivity, cation permeability, and binding to allosteric modulators. CHRNB4 forms heteropentameric neuronal acetylcholine receptors with CHRNA2, CHRNA3 and CHRNA4, as well as CHRNA5 and CHRNB3 as accesory subunits. CHRNA3:CHRNB4 being predominant in neurons of the autonomic ganglia, it is known as ganglionic nicotinic receptor. CHRNA3:CHRNB4 or CHRNA3:CHRNA5:CHRNB4 play also an important role in the habenulo-interpeduncular tract, modulating the mesolimbic dopamine system and affecting reward circuits and addiction. Hypothalamic CHRNA3:CHRNB4 nAChR activation by nicotine leads to activation of POMC neurons and a decrease in food intake. In Gallus gallus (Chicken), this protein is Neuronal acetylcholine receptor subunit beta-4 (CHRNB4).